Consider the following 338-residue polypeptide: Tetraacyldisaccharide 4'-kinase (338 aa).

ATP is bound at residue 53–60 (VAGGAGKT).

The protein belongs to the LpxK family.

The catalysed reaction is a lipid A disaccharide + ATP = a lipid IVA + ADP + H(+). It functions in the pathway glycolipid biosynthesis; lipid IV(A) biosynthesis; lipid IV(A) from (3R)-3-hydroxytetradecanoyl-[acyl-carrier-protein] and UDP-N-acetyl-alpha-D-glucosamine: step 6/6. Its function is as follows. Transfers the gamma-phosphate of ATP to the 4'-position of a tetraacyldisaccharide 1-phosphate intermediate (termed DS-1-P) to form tetraacyldisaccharide 1,4'-bis-phosphate (lipid IVA). This chain is Tetraacyldisaccharide 4'-kinase, found in Polaromonas sp. (strain JS666 / ATCC BAA-500).